A 270-amino-acid polypeptide reads, in one-letter code: Undecaprenyl-diphosphatase 2 (270 aa).

Transmembrane regions (helical) follow at residues 1-21 (MDLI…FLPV), 39-59 (QGLA…VWYF), 87-107 (WAVI…KGFI), 114-134 (PLVI…SDVV), 147-167 (LSWK…IPGT), 190-210 (FSFL…TLDL), 221-241 (AMGL…HFFL), and 247-267 (VGML…LVLF).

The protein belongs to the UppP family.

Its subcellular location is the cell inner membrane. The catalysed reaction is di-trans,octa-cis-undecaprenyl diphosphate + H2O = di-trans,octa-cis-undecaprenyl phosphate + phosphate + H(+). Catalyzes the dephosphorylation of undecaprenyl diphosphate (UPP). Confers resistance to bacitracin. In Stutzerimonas stutzeri (strain A1501) (Pseudomonas stutzeri), this protein is Undecaprenyl-diphosphatase 2.